Here is a 76-residue protein sequence, read N- to C-terminus: Defensin-like protein 122 (76 aa).

An N-terminal signal peptide occupies residues 1-25 (MSKTTVIAIFMVVLVLGLVTKETQG). 4 disulfides stabilise this stretch: C29–C74, C39–C60, C44–C68, and C48–C70.

This sequence belongs to the DEFL family. As to expression, expressed in flower buds, but not in stems, roots or rosette leaves.

The protein localises to the secreted. The chain is Defensin-like protein 122 (LCR30) from Arabidopsis thaliana (Mouse-ear cress).